A 103-amino-acid polypeptide reads, in one-letter code: Urease subunit beta (103 aa).

It belongs to the urease beta subunit family. Heterotrimer of UreA (gamma), UreB (beta) and UreC (alpha) subunits. Three heterotrimers associate to form the active enzyme.

Its subcellular location is the cytoplasm. It carries out the reaction urea + 2 H2O + H(+) = hydrogencarbonate + 2 NH4(+). Its pathway is nitrogen metabolism; urea degradation; CO(2) and NH(3) from urea (urease route): step 1/1. The polypeptide is Urease subunit beta (Streptomyces avermitilis (strain ATCC 31267 / DSM 46492 / JCM 5070 / NBRC 14893 / NCIMB 12804 / NRRL 8165 / MA-4680)).